Reading from the N-terminus, the 29-residue chain is NADP phosphatase 1 (29 aa).

In terms of assembly, homodimer.

It localises to the cytoplasm. The chain is NADP phosphatase 1 from Arthrobacter sp. (strain KM).